We begin with the raw amino-acid sequence, 240 residues long: Aldehyde dehydrogenase, cytosolic 2 (240 aa).

Residues Glu-8 and Cys-42 contribute to the active site. N6-acetyllysine occurs at positions 106, 149, 151, and 174.

Belongs to the aldehyde dehydrogenase family. As to quaternary structure, homotetramer. In terms of tissue distribution, non-lens specific, predominant form expressed in the liver.

Its subcellular location is the cytoplasm. The enzyme catalyses an aldehyde + NAD(+) + H2O = a carboxylate + NADH + 2 H(+). It functions in the pathway alcohol metabolism; ethanol degradation; acetate from ethanol: step 2/2. Its function is as follows. Elephant shrews, in contrast to other mammals, possess both a lens- and a non-lens specific class-1 aldehyde dehydrogenase. Can convert/oxidize retinaldehyde to retinoic acid. The sequence is that of Aldehyde dehydrogenase, cytosolic 2 from Macroscelides proboscideus (Short-eared elephant shrew).